The following is a 122-amino-acid chain: Large ribosomal subunit protein uL14 (122 aa).

Belongs to the universal ribosomal protein uL14 family. As to quaternary structure, part of the 50S ribosomal subunit. Forms a cluster with proteins L3 and L19. In the 70S ribosome, L14 and L19 interact and together make contacts with the 16S rRNA in bridges B5 and B8.

Its function is as follows. Binds to 23S rRNA. Forms part of two intersubunit bridges in the 70S ribosome. This Shewanella halifaxensis (strain HAW-EB4) protein is Large ribosomal subunit protein uL14.